Reading from the N-terminus, the 146-residue chain is Acidic phospholipase A2 S13-69J (146 aa).

The first 19 residues, methionine 1 to alanine 19, serve as a signal peptide directing secretion. Positions alanine 20–leucine 27 are excised as a propeptide. 7 disulfide bridges follow: cysteine 38–cysteine 98, cysteine 54–cysteine 145, cysteine 56–cysteine 72, cysteine 71–cysteine 126, cysteine 78–cysteine 119, cysteine 87–cysteine 112, and cysteine 105–cysteine 117. Ca(2+) is bound by residues tyrosine 55, glycine 57, and glycine 59. Histidine 75 is a catalytic residue. Aspartate 76 is a binding site for Ca(2+). The active site involves aspartate 120.

This sequence belongs to the phospholipase A2 family. Group I subfamily. D49 sub-subfamily. Ca(2+) serves as cofactor. Expressed by the venom gland.

The protein resides in the secreted. It carries out the reaction a 1,2-diacyl-sn-glycero-3-phosphocholine + H2O = a 1-acyl-sn-glycero-3-phosphocholine + a fatty acid + H(+). Functionally, snake venom phospholipase A2 (PLA2) that inhibits collagen-induced platelet aggregation. PLA2 catalyzes the calcium-dependent hydrolysis of the 2-acyl groups in 3-sn-phosphoglycerides. This Austrelaps superbus (Lowland copperhead snake) protein is Acidic phospholipase A2 S13-69J.